A 1020-amino-acid chain; its full sequence is Glucan endo-1,3-beta-D-glucosidase (1020 aa).

A signal peptide spans 1–25 (MKGKNVQLLFALVVIILLFPTGASA). The beta-sandwich subdomain stretch occupies residues 28–251 (HAVSVGKGSY…ADYIAIAKLP (224 aa)). The GH81 domain occupies 28 to 722 (HAVSVGKGSY…HWIHNLAELG (695 aa)). The alpha/beta subdomain stretch occupies residues 252-350 (EKDGNMLAKF…EGKRFTTELT (99 aa)). The (alpha/beta)6 barrel subdomain stretch occupies residues 360–722 (DLGDYDRERL…HWIHNLAELG (363 aa)). 11 residues coordinate (1,3-beta-D-glucosyl)n: Y387, K391, H458, D466, H470, D530, N540, E542, E546, E699, and R704. D466 is a catalytic residue. Residues E542 and E546 contribute to the active site. Residues 771–790 (HSFNIGNGDGPTNPDPSEPD) form a disordered region. One can recognise a CBM6 domain in the interval 796–922 (ERIQAEAYDA…LMNVNWFVFR (127 aa)). (1,3-beta-D-glucosyl)n contacts are provided by E812, W825, D853, N878, D912, and N915. A CBM56 domain is found at 928 to 1020 (NGDSHTHPDY…YTTEWFTYSR (93 aa)).

Belongs to the glycosyl hydrolase 81 family.

The protein resides in the secreted. The enzyme catalyses Hydrolysis of (1-&gt;3)-beta-D-glucosidic linkages in (1-&gt;3)-beta-D-glucans.. Its function is as follows. Cleaves internal linkages in 1,3-beta-glucan. May contribute to plant biomass degradation. The polypeptide is Glucan endo-1,3-beta-D-glucosidase (Halalkalibacterium halodurans (strain ATCC BAA-125 / DSM 18197 / FERM 7344 / JCM 9153 / C-125) (Bacillus halodurans)).